Reading from the N-terminus, the 118-residue chain is Small ribosomal subunit protein uS13 (118 aa).

The tract at residues 93 to 118 is disordered; it reads RNLPVRGQRSKTNARTRKGPRKPIKR.

The protein belongs to the universal ribosomal protein uS13 family. Part of the 30S ribosomal subunit. Forms a loose heterodimer with protein S19. Forms two bridges to the 50S subunit in the 70S ribosome.

Its function is as follows. Located at the top of the head of the 30S subunit, it contacts several helices of the 16S rRNA. In the 70S ribosome it contacts the 23S rRNA (bridge B1a) and protein L5 of the 50S subunit (bridge B1b), connecting the 2 subunits; these bridges are implicated in subunit movement. Contacts the tRNAs in the A and P-sites. The polypeptide is Small ribosomal subunit protein uS13 (Saccharophagus degradans (strain 2-40 / ATCC 43961 / DSM 17024)).